The chain runs to 436 residues: Fibrinogen gamma chain (436 aa).

An N-terminal signal peptide occupies residues 1–25 (MSWSLQPPSFLLCCLLLLFSPTGLA). Asparagine 77 is a glycosylation site (N-linked (GlcNAc...) asparagine). The region spanning 169–415 (QIHDTTGKDC…ETTMKIIPFN (247 aa)) is the Fibrinogen C-terminal domain. Residues cysteine 178 and cysteine 207 are joined by a disulfide bond. Ca(2+) is bound by residues aspartate 343, aspartate 345, and glycine 349. Cysteine 351 and cysteine 364 are oxidised to a cystine. Glutamine 423 is covalently cross-linked (Isoglutamyl lysine isopeptide (Gln-Lys) (interchain with K-431)). At serine 430 the chain carries Phosphoserine. Lysine 431 participates in a covalent cross-link: Isoglutamyl lysine isopeptide (Lys-Gln) (interchain with Q-423).

In terms of assembly, heterohexamer; disulfide linked. Contains 2 sets of 3 non-identical chains (alpha, beta and gamma). The 2 heterotrimers are in head to head conformation with the N-termini in a small central domain. Post-translationally, conversion of fibrinogen to fibrin is triggered by thrombin, which cleaves fibrinopeptides A and B from alpha and beta chains, and thus exposes the N-terminal polymerization sites responsible for the formation of the soft clot. The soft clot is converted into the hard clot by factor XIIIA which catalyzes the epsilon-(gamma-glutamyl)lysine cross-linking between gamma chains (stronger) and between alpha chains (weaker) of different monomers.

It localises to the secreted. Together with fibrinogen alpha (FGA) and fibrinogen beta (FGB), polymerizes to form an insoluble fibrin matrix. Fibrin has a major function in hemostasis as one of the primary components of blood clots. In addition, functions during the early stages of wound repair to stabilize the lesion and guide cell migration during re-epithelialization. Was originally thought to be essential for platelet aggregation, based on in vitro studies using anticoagulated blood. However, subsequent studies have shown that it is not absolutely required for thrombus formation in vivo. Enhances expression of SELP in activated platelets via an ITGB3-dependent pathway. Maternal fibrinogen is essential for successful pregnancy. Fibrin deposition is also associated with infection, where it protects against IFNG-mediated hemorrhage. May also facilitate the immune response via both innate and T-cell mediated pathways. This is Fibrinogen gamma chain (Fgg) from Mus musculus (Mouse).